The primary structure comprises 529 residues: Bifunctional purine biosynthesis protein PurH (529 aa).

Residues 1-146 form the MGS-like domain; the sequence is MAPTALLSVS…KNHAHVAVLT (146 aa).

It belongs to the PurH family.

The catalysed reaction is (6R)-10-formyltetrahydrofolate + 5-amino-1-(5-phospho-beta-D-ribosyl)imidazole-4-carboxamide = 5-formamido-1-(5-phospho-D-ribosyl)imidazole-4-carboxamide + (6S)-5,6,7,8-tetrahydrofolate. It catalyses the reaction IMP + H2O = 5-formamido-1-(5-phospho-D-ribosyl)imidazole-4-carboxamide. It participates in purine metabolism; IMP biosynthesis via de novo pathway; 5-formamido-1-(5-phospho-D-ribosyl)imidazole-4-carboxamide from 5-amino-1-(5-phospho-D-ribosyl)imidazole-4-carboxamide (10-formyl THF route): step 1/1. Its pathway is purine metabolism; IMP biosynthesis via de novo pathway; IMP from 5-formamido-1-(5-phospho-D-ribosyl)imidazole-4-carboxamide: step 1/1. The chain is Bifunctional purine biosynthesis protein PurH from Synechococcus sp. (strain CC9311).